We begin with the raw amino-acid sequence, 365 residues long: UDP-N-acetylglucosamine--N-acetylmuramyl-(pentapeptide) pyrophosphoryl-undecaprenol N-acetylglucosamine transferase (365 aa).

UDP-N-acetyl-alpha-D-glucosamine contacts are provided by residues 11 to 13, N124, R165, S192, I246, and Q291; that span reads TGG.

It belongs to the glycosyltransferase 28 family. MurG subfamily.

The protein resides in the cell inner membrane. The enzyme catalyses di-trans,octa-cis-undecaprenyl diphospho-N-acetyl-alpha-D-muramoyl-L-alanyl-D-glutamyl-meso-2,6-diaminopimeloyl-D-alanyl-D-alanine + UDP-N-acetyl-alpha-D-glucosamine = di-trans,octa-cis-undecaprenyl diphospho-[N-acetyl-alpha-D-glucosaminyl-(1-&gt;4)]-N-acetyl-alpha-D-muramoyl-L-alanyl-D-glutamyl-meso-2,6-diaminopimeloyl-D-alanyl-D-alanine + UDP + H(+). The protein operates within cell wall biogenesis; peptidoglycan biosynthesis. Functionally, cell wall formation. Catalyzes the transfer of a GlcNAc subunit on undecaprenyl-pyrophosphoryl-MurNAc-pentapeptide (lipid intermediate I) to form undecaprenyl-pyrophosphoryl-MurNAc-(pentapeptide)GlcNAc (lipid intermediate II). This Nitratidesulfovibrio vulgaris (strain DP4) (Desulfovibrio vulgaris) protein is UDP-N-acetylglucosamine--N-acetylmuramyl-(pentapeptide) pyrophosphoryl-undecaprenol N-acetylglucosamine transferase.